A 320-amino-acid chain; its full sequence is Putative thiosulfate sulfurtransferase (320 aa).

The signal sequence occupies residues 1 to 37 (MSVRSLRWPRQKAFLAVISLVVAVLLAVPGWLTPATA). 2 Rhodanese domains span residues 56–166 (NNKQ…PVTK) and 194–315 (LTGK…PVET). The Cysteine persulfide intermediate role is filled by Cys274.

It localises to the periplasm. It catalyses the reaction thiosulfate + hydrogen cyanide = thiocyanate + sulfite + 2 H(+). May be a sulfotransferase involved in the transport of sulfate. Displays very low rhodanese activity. The protein is Putative thiosulfate sulfurtransferase (rhdA) of Synechococcus elongatus (strain ATCC 33912 / PCC 7942 / FACHB-805) (Anacystis nidulans R2).